Consider the following 268-residue polypeptide: Probable membrane transporter protein HI_0806 (268 aa).

A run of 8 helical transmembrane segments spans residues isoleucine 6–glycine 26, valine 46–phenylalanine 66, isoleucine 79–phenylalanine 99, threonine 101–leucine 121, glycine 147–valine 167, isoleucine 178–leucine 198, leucine 212–phenylalanine 232, and leucine 248–histidine 268.

This sequence belongs to the 4-toluene sulfonate uptake permease (TSUP) (TC 2.A.102) family.

The protein localises to the cell membrane. The polypeptide is Probable membrane transporter protein HI_0806 (Haemophilus influenzae (strain ATCC 51907 / DSM 11121 / KW20 / Rd)).